Consider the following 491-residue polypeptide: Cholesterol 22-monohydroxylase CYP90B51 (491 aa).

Residues 6-26 (ITFYCLSSILSVLLIFIFILI) traverse the membrane as a helical segment. Residue Cys437 participates in heme binding.

It belongs to the cytochrome P450 family. As to expression, mainly expressed in leaves and seed pods and, to a lower extent, in flowers and stems.

It is found in the membrane. The catalysed reaction is cholesterol + reduced [NADPH--hemoprotein reductase] + O2 = (22S)-22-hydroxycholesterol + oxidized [NADPH--hemoprotein reductase] + H2O + H(+). It participates in steroid metabolism; cholesterol metabolism. Functionally, canonical brassinosteroid (BR)-biosynthetic enzyme capable of converting cholesterol to 22S-hydroxycholesterol via sterol-C22 hydroxylation. This Trigonella foenum-graecum (Fenugreek) protein is Cholesterol 22-monohydroxylase CYP90B51.